Consider the following 138-residue polypeptide: Large ribosomal subunit protein eL27 (138 aa).

Belongs to the eukaryotic ribosomal protein eL27 family.

The chain is Large ribosomal subunit protein eL27 (RPL27) from Solanum tuberosum (Potato).